The sequence spans 339 residues: UDP-glucose 4-epimerase (339 aa).

NAD(+)-binding positions include 12 to 13, 32 to 37, 59 to 60, 81 to 85, Asn-100, Ser-125, Tyr-150, Lys-154, and Phe-179; these read FI, DNLCNS, DI, and FAGLK. Substrate is bound by residues Ser-125 and Tyr-150. Tyr-150 functions as the Proton acceptor in the catalytic mechanism. Substrate-binding positions include Asn-180, 200-201, 217-219, Arg-232, and 293-296; these read NL, AVF, and RAGD.

This sequence belongs to the NAD(P)-dependent epimerase/dehydratase family. As to quaternary structure, homodimer. It depends on NAD(+) as a cofactor.

The catalysed reaction is UDP-alpha-D-glucose = UDP-alpha-D-galactose. The protein operates within carbohydrate metabolism; galactose metabolism. Involved in the metabolism of galactose. Plays an essential role in the incorporation of galactose into meningococcal lipopolysaccharide surface molecules, which are important for pathogenesis. Catalyzes the conversion of UDP-galactose (UDP-Gal) to UDP-glucose (UDP-Glc) through a mechanism involving the transient reduction of NAD. This is UDP-glucose 4-epimerase (galE) from Neisseria meningitidis serogroup C.